A 543-amino-acid chain; its full sequence is Serendipity locus protein alpha (543 aa).

The protein localises to the cytoplasm. Its subcellular location is the cell membrane. In terms of biological role, required for the cellularization of the syncytial blastoderm embryo. Involved in the localization of the actin filaments just prior to and during plasma membrane invagination. Sry-alpha together with nullo and bnk may provide auxiliary functions, by acting both to stabilize a large and dynamic microfilament structure and regulate its functions. The sequence is that of Serendipity locus protein alpha (Sry-alpha) from Drosophila subobscura (Fruit fly).